A 520-amino-acid chain; its full sequence is Peptide chain release factor 3 (520 aa).

The tr-type G domain maps to 8–273 (ESRKTFAIIS…AYVDHAPMPN (266 aa)). GTP-binding positions include 17–24 (SHPDAGKT), 85–89 (DTPGH), and 139–142 (NKLD).

This sequence belongs to the TRAFAC class translation factor GTPase superfamily. Classic translation factor GTPase family. PrfC subfamily.

The protein resides in the cytoplasm. Functionally, increases the formation of ribosomal termination complexes and stimulates activities of RF-1 and RF-2. It binds guanine nucleotides and has strong preference for UGA stop codons. It may interact directly with the ribosome. The stimulation of RF-1 and RF-2 is significantly reduced by GTP and GDP, but not by GMP. The protein is Peptide chain release factor 3 of Staphylococcus carnosus (strain TM300).